Consider the following 419-residue polypeptide: Isocitrate dehydrogenase [NADP] (419 aa).

NADP(+) is bound at residue Thr102. D-threo-isocitrate-binding residues include Ser111, Asn113, Arg117, Arg127, and Arg151. Mg(2+) is bound at residue Asp306. NADP(+)-binding positions include 338-344, Asn351, Tyr390, and Arg394; that span reads HGSAPKY.

The protein belongs to the isocitrate and isopropylmalate dehydrogenases family. In terms of assembly, homodimer. The cofactor is Mg(2+). Mn(2+) serves as cofactor.

It carries out the reaction D-threo-isocitrate + NADP(+) = 2-oxoglutarate + CO2 + NADPH. Functionally, catalyzes the oxidative decarboxylation of isocitrate to 2-oxoglutarate and carbon dioxide with the concomitant reduction of NADP(+). This Haloferax volcanii (strain ATCC 29605 / DSM 3757 / JCM 8879 / NBRC 14742 / NCIMB 2012 / VKM B-1768 / DS2) (Halobacterium volcanii) protein is Isocitrate dehydrogenase [NADP].